The primary structure comprises 729 residues: FYN-binding protein 2 (729 aa).

Disordered regions lie at residues Lys18–Gly130, Glu170–Leu320, Glu371–Val408, and Val469–Asp490. Composition is skewed to polar residues over residues Gly69–Ser81, Lys89–Lys99, Gly190–Ser216, and Lys226–Gln240. Positions Gly275–Pro284 are enriched in pro residues. A compositionally biased stretch (basic and acidic residues) spans Pro374–Pro402. Low complexity predominate over residues Thr473 to Ser485. Residue Tyr489 is modified to Phosphotyrosine. The SH2-binding; to LCP2 signature appears at Tyr520–Ile523. The segment at Asp576–Asp603 is disordered. Over residues Asp584–Asp593 the composition is skewed to acidic residues. At Tyr591 the chain carries Phosphotyrosine. Residues Val594–Asp603 show a composition bias toward basic and acidic residues. The region spanning Leu668–Gln728 is the SH3 domain.

Interacts with SKAP1, LCK and FYN. The phosphorylated form interacts with LCP2. Phosphorylation is required for its function in T-cell activation.

Its subcellular location is the membrane raft. Its function is as follows. Adapter protein that plays a role in T-cell receptor (TCR)-mediated activation of signaling pathways. Required for T-cell activation and integrin-mediated T-cell adhesion in response to TCR stimulation. The polypeptide is FYN-binding protein 2 (Mus musculus (Mouse)).